Reading from the N-terminus, the 330-residue chain is Type II restriction enzyme Cfr9I (330 aa).

This sequence belongs to the XcyI type II restriction endonuclease family. Mg(2+) is required as a cofactor.

It catalyses the reaction Endonucleolytic cleavage of DNA to give specific double-stranded fragments with terminal 5'-phosphates.. Functionally, an E and P subtype restriction enzyme that recognizes the double-stranded sequence 5'-CCCGGG-3' and cleaves after C-1. In Citrobacter freundii, this protein is Type II restriction enzyme Cfr9I (cfr9IR).